Consider the following 381-residue polypeptide: GDP-mannose transporter (381 aa).

Topologically, residues 1–39 (MVESKKTDDYAIEMDKIDQGSKNFEAAAPPQPRSVPSSS) are cytoplasmic. The helical transmembrane segment at 40-60 (LSGNPVLPVLAYCGSSILMTV) threads the bilayer. Residues 61-68 (MNKYVLSG) lie on the Lumenal side of the membrane. A helical transmembrane segment spans residues 69-89 (LDFNLNFFLLCVQSIVCIIAI). At 90–109 (QTCKFCGLITYRDFSADEAK) the chain is on the cytoplasmic side. Residues 110 to 126 (KWFPISLLLIGMIYTGS) form a helical membrane-spanning segment. Residues 127–133 (KALQFLS) lie on the Lumenal side of the membrane. Residues 134–150 (IPVYTIFKNLTIILIAY) form a helical membrane-spanning segment. Residues 151 to 159 (GEVLWFGGS) are Cytoplasmic-facing. Residues 160 to 181 (VTGLTLFSFGLMVLSSIIAAWA) form a helical membrane-spanning segment. Topologically, residues 182–199 (DIKHAVESSGDTSAQVST) are lumenal. Residues 200–220 (LNAGYIWMLINCLCTSSYVLG) traverse the membrane as a helical segment. Over 221–232 (MRKRIKLTNFKD) the chain is Cytoplasmic. The helical transmembrane segment at 233-253 (FDTMFYNNLLSIPVLVVLTGL) threads the bilayer. Residues 254-273 (MEDWSSANIDRNFPQADRSS) lie on the Lumenal side of the membrane. Residues 274–294 (IMFAMILSGLSSVFISYTSAW) traverse the membrane as a helical segment. Topologically, residues 295–302 (CVRVTSST) are cytoplasmic. The chain crosses the membrane as a helical span at residues 303 to 323 (TYSMVGALNKLPIALSGLIFF). The Lumenal portion of the chain corresponds to 324-326 (DAP). The helical transmembrane segment at 327–347 (VTFPSVSAIAVGFVSGIVYAI) threads the bilayer. The Cytoplasmic segment spans residues 348–381 (AKIKQNAKPKTGVLPTSNPLVSASSQSMRDSLRS).

Belongs to the TPT transporter family. SLC35D subfamily. Homooligomer.

Its subcellular location is the golgi apparatus membrane. The protein localises to the cytoplasmic vesicle membrane. The protein resides in the endoplasmic reticulum membrane. Its function is as follows. Involved in the import of GDP-mannose from the cytoplasm into the Golgi lumen. This Aspergillus oryzae (strain ATCC 42149 / RIB 40) (Yellow koji mold) protein is GDP-mannose transporter (gmt1).